The following is a 350-amino-acid chain: Calcium uniporter protein, mitochondrial (350 aa).

The transit peptide at 1-49 directs the protein to the mitochondrion; that stretch reads MAAAAGRSLLLLLCSRGGGGGAGGCGALTAGCFPGLGVSRHRPHQQHRT. The Mitochondrial matrix portion of the chain corresponds to 50 to 232; that stretch reads AHQRPASWQS…ISRKAEKRTT (183 aa). Phosphoserine; by CaMK2 occurs at positions 56 and 91. The interval 74 to 164 is N-terminal MCU domain; sequence VTVVYQNGLP…LTYHVRPPKR (91 aa). C96 carries the post-translational modification S-glutathionyl cysteine. Residues 191 to 220 are a coiled coil; sequence IEQHQLNKERELVERLEDLKQQLAPLEKVR. A helical transmembrane segment spans residues 233–256; sequence LVLWGGLAYMATQFGILARLTWWE. At 257–264 the chain is on the mitochondrial intermembrane side; the sequence is YSWDIMEP. Residues 259-267 carry the Selectivity filter motif; that stretch reads WDIMEPVTY. Ca(2+) is bound at residue E263. A helical transmembrane segment spans residues 265–282; that stretch reads VTYFITYGSAMAMYAYFV. At 283 to 350 the chain is on the mitochondrial matrix side; it reads MTRQEYVYPE…LPLRQIGEKE (68 aa). The tract at residues 284–289 is juxtamembrane helix; sequence TRQEYV. The stretch at 310–338 forms a coiled coil; the sequence is RFDLEKYNQLKDAIAQAEMDLKRLRDPLQ. At K331 the chain carries N6-acetyllysine.

Belongs to the MCU (TC 1.A.77) family. As to quaternary structure, homotetramer. Component of the uniplex complex, composed of MCU, EMRE/SMDT1, MICU1 and MICU2 (or MICU3) in a 4:4:1:1 stoichiometry. Interacts with CCDC109B/MCUB; this inhibits channel activity. Interacts with MCUR1. Interactions with MICU1 and MCUR1 are mutually exclusive. Interacts with SLC25A23. Phosphorylation by CaMK2 in heart leads to increased MCU current. The regulation of MCU by CaMK2 is however subject to discussion: another group was unable to reproduce these results. Phosphorylated on tyrosines by PTK2B/PYK2, promoting oligomerization. In terms of processing, glutathionylation at Cys-96 in response to reactive oxygen species (ROS) promotes MCU higher-order assembly, leading to constitutive activation of the MCU channel and mitochondrial calcium overload. Post-translationally, undergoes proteolytic degradation by SPG7. As to expression, detected in heart muscle (at protein level). Expressed in skeletal muscle, heart, kidney, liver, brain, lung, white fat and spleen.

Its subcellular location is the mitochondrion inner membrane. It catalyses the reaction Ca(2+)(in) = Ca(2+)(out). With respect to regulation, MCU channel activity is regulated by the heterodimer composed of MICU1 and either MICU2 or MICU3, which act as calcium-sensors. At low calcium levels, MICU1 occludes the pore of the MCU channel, preventing mitochondrial calcium uptake. At higher calcium levels, calcium-binding to MICU1 and MICU2 (or MICU3) induces a conformational change that weakens MCU-MICU1 interactions and moves the MICU1-MICU2 heterodimer away from the pore, allowing calcium permeation through the channel. MCU channel activity is gated by EMRE/SMDT1 via the juxtamembrane helix loop. Inhibited by ruthenium red or its derivative Ru360. Functionally, channel-forming and calcium-conducting subunit of the mitochondrial inner membrane calcium uniporter complex (uniplex), which mediates calcium uptake into the mitochondrial matrix. MCU channel activity is regulated by the calcium-sensor subunits of the uniplex MICU1 and MICU2 (or MICU3). Mitochondrial calcium homeostasis plays key roles in cellular physiology and regulates ATP production, cytoplasmic calcium signals and activation of cell death pathways. Involved in buffering the amplitude of systolic calcium rises in cardiomyocytes. While dispensable for baseline homeostatic cardiac function, acts as a key regulator of short-term mitochondrial calcium loading underlying a 'fight-or-flight' response during acute stress: acts by mediating a rapid increase of mitochondrial calcium in pacemaker cells. Participates in mitochondrial permeability transition during ischemia-reperfusion injury. Mitochondrial calcium uptake in skeletal muscle cells is involved in muscle size in adults. Regulates synaptic vesicle endocytosis kinetics in central nerve terminal. Regulates glucose-dependent insulin secretion in pancreatic beta-cells by regulating mitochondrial calcium uptake. Involved in antigen processing and presentation. This is Calcium uniporter protein, mitochondrial from Mus musculus (Mouse).